Reading from the N-terminus, the 405-residue chain is SPbeta prophage-derived uncharacterized protein YomR (405 aa).

Residues glutamine 9 to glutamine 36 adopt a coiled-coil conformation.

The polypeptide is SPbeta prophage-derived uncharacterized protein YomR (yomR) (Bacillus subtilis (strain 168)).